The chain runs to 273 residues: NADH-ubiquinone oxidoreductase 29.9 kDa subunit, mitochondrial (273 aa).

A mitochondrion-targeting transit peptide spans 1–8 (MRAALRLL).

This sequence belongs to the complex I NDUFA5 subunit family. As to quaternary structure, complex I is composed of about 40 different subunits.

It localises to the mitochondrion inner membrane. Functionally, accessory subunit of the mitochondrial membrane respiratory chain NADH dehydrogenase (Complex I), that is believed not to be involved in catalysis. Complex I functions in the transfer of electrons from NADH to the respiratory chain. The immediate electron acceptor for the enzyme is believed to be ubiquinone. This is NADH-ubiquinone oxidoreductase 29.9 kDa subunit, mitochondrial (nuo-32) from Neurospora crassa (strain ATCC 24698 / 74-OR23-1A / CBS 708.71 / DSM 1257 / FGSC 987).